We begin with the raw amino-acid sequence, 150 residues long: uncharacterized protein (150 aa).

In terms of domain architecture, HTH asnC-type spans L5–G66. Residues I24–K43 constitute a DNA-binding region (H-T-H motif).

This is an uncharacterized protein from Pyrococcus abyssi (strain GE5 / Orsay).